The primary structure comprises 268 residues: Tryptophan synthase alpha chain (268 aa).

Residues Glu-49 and Asp-60 each act as proton acceptor in the active site.

This sequence belongs to the TrpA family. Tetramer of two alpha and two beta chains.

It carries out the reaction (1S,2R)-1-C-(indol-3-yl)glycerol 3-phosphate + L-serine = D-glyceraldehyde 3-phosphate + L-tryptophan + H2O. The protein operates within amino-acid biosynthesis; L-tryptophan biosynthesis; L-tryptophan from chorismate: step 5/5. In terms of biological role, the alpha subunit is responsible for the aldol cleavage of indoleglycerol phosphate to indole and glyceraldehyde 3-phosphate. This is Tryptophan synthase alpha chain from Shigella dysenteriae serotype 1 (strain Sd197).